A 1883-amino-acid polypeptide reads, in one-letter code: Chromodomain-helicase-DNA-binding protein 1 (1883 aa).

The segment covering 1–14 has biased composition (polar residues); it reads MSQALNESANSIGS. The interval 1-293 is disordered; that stretch reads MSQALNESAN…SEDEATDSED (293 aa). Low complexity predominate over residues 39–56; sequence SGSDSDSDSSSGNSSDGR. The segment covering 114–128 has biased composition (polar residues); it reads QRNQSINNANTSSSL. Low complexity predominate over residues 159 to 172; the sequence is DSSANVSPTSSSSS. The span at 213 to 226 shows a compositional bias: acidic residues; it reads SDESDESEDSDDEV. The segment covering 236 to 247 has biased composition (polar residues); that stretch reads ATTSRSKLAQQQ. The segment covering 284–293 has biased composition (acidic residues); it reads SEDEATDSED. Chromo domains follow at residues 318–414 and 439–501; these read ETIE…YWRR and NNVD…TPSR. A Helicase ATP-binding domain is found at 540–710; it reads LHSWCKENSV…WALLHFIMPD (171 aa). 553 to 560 provides a ligand contact to ATP; it reads DEMGLGKT. Positions 661–664 match the DEAH box motif; it reads DEAH. Residues 840–991 form the Helicase C-terminal domain; that stretch reads LLDKLLCRLK…HLVIQRMDTT (152 aa). 5 disordered regions span residues 1074-1185, 1246-1265, 1390-1491, 1599-1829, and 1848-1883; these read FEEE…MKEK, HKEE…AKQR, TKGG…MHFT, KAGG…PYSS, and PPPS…RTQT. Residues 1091-1103 show a composition bias toward acidic residues; the sequence is GEEDDSKDWDDII. Basic and acidic residues predominate over residues 1106-1121; it reads GFRKAIDDQERAKEME. Residues 1393–1402 show a composition bias toward basic residues; sequence GQRRQRRPRA. Residues 1437 to 1451 are compositionally biased toward polar residues; sequence AESSNSQVDPSTASP. Over residues 1466 to 1476 the composition is skewed to basic residues; it reads KAKKSKARSKK. Positions 1505–1606 are CHD1 helical C-terminal domain (CHCT); it reads LDPSIFNECK…KQKAGGDGEA (102 aa). Over residues 1600–1612 the composition is skewed to basic and acidic residues; sequence AGGDGEAKGKDKG. Over residues 1613–1622 the composition is skewed to low complexity; that stretch reads SSGSPAKSKP. Residues 1627–1638 show a composition bias toward basic and acidic residues; the sequence is TEEKEKERDRSG. The span at 1724–1738 shows a compositional bias: gly residues; sequence YYGGSGPPMGSGSYE. The segment covering 1742–1755 has biased composition (polar residues); sequence NSRRQGPTSPSTPR. 3 stretches are compositionally biased toward basic and acidic residues: residues 1773-1794, 1805-1817, and 1868-1883; these read EMER…RYDG, YHRE…EKRR, and YPAD…RTQT.

The protein belongs to the SNF2/RAD54 helicase family. In terms of assembly, monomer. Component of the SAGA complex. Interacts with SSRP1.

It is found in the nucleus. The protein resides in the chromosome. It carries out the reaction ATP + H2O = ADP + phosphate + H(+). Its function is as follows. ATP-dependent chromatin-remodeling factor which functions as substrate recognition component of the transcription regulatory histone acetylation (HAT) complex SAGA. Regulates polymerase II transcription. Also required for efficient transcription by RNA polymerase I, and more specifically the polymerase I transcription termination step. Regulates negatively DNA replication. Not only involved in transcription-related chromatin remodeling, but also required to maintain a specific chromatin configuration across the genome. Involved in assembly of active chromatin. Required for maintaining open chromatin and pluripotency in embryonic stem cells and is important for wing development and fertility. Is essential for the incorporation of histone H3.3 and assembly of paternal chromatin. Required for replication-independent nucleosome assembly in the decondensing male pronucleus. The chain is Chromodomain-helicase-DNA-binding protein 1 (Chd1) from Drosophila melanogaster (Fruit fly).